The following is a 318-amino-acid chain: MSTRELIVLGTSSAVPTKRRAHNGYFLRWDGHGILFDPGEGTQRQMRYAGISAHDITRVCVTHFHGDHSLGLPGVIQRIARDGVTHPVRVAYPAAGQEYWERLRYATSFVDTEVIEAQPLAGDEVVVSGEDEFTVTALPLDHSIPTYGYRIAEPDRVHMLADRLAARGIRGPAVGRLKAEGFLIDAAGNRVELADYSVVRPGQVFAFVMDTGVCDTAVRLAERADLLVIEATFLNAEAELAARYRHLTAGQAGMIAAQAGVRRLVLTHFSERYGREEEDRFIAEAAACFSGEIVLAQDVMRVAVPSRRSEGGGTVAGA.

Zn(2+) is bound by residues His63, His65, Asp67, His68, His142, Asp210, and His268. Asp67 functions as the Proton acceptor in the catalytic mechanism.

It belongs to the RNase Z family. In terms of assembly, homodimer. Zn(2+) is required as a cofactor.

It catalyses the reaction Endonucleolytic cleavage of RNA, removing extra 3' nucleotides from tRNA precursor, generating 3' termini of tRNAs. A 3'-hydroxy group is left at the tRNA terminus and a 5'-phosphoryl group is left at the trailer molecule.. Zinc phosphodiesterase, which displays some tRNA 3'-processing endonuclease activity. Probably involved in tRNA maturation, by removing a 3'-trailer from precursor tRNA. The protein is Ribonuclease Z of Thermobifida fusca (strain YX).